Reading from the N-terminus, the 884-residue chain is MFNFLENEKYKLKEYQPLVNQINLLETSVKNYTDIELKEQFDKLRKEYFLSQNFSNDIIARSFSLTREAAFRTIGLRPFDQQLLGGLVLNSGKITEMKTGEGKTLVATLPAALNAISGRGVHIVTVNDYLAKRDSTWMGQIYDYLGLTVGLVQSQMESQERKDNYFQDITYITNSELGFDYLRDNQVKTFQEMVQRKFNYCIIDEVDAILIDEARTPLVLSIPDTIHNPKIYLDANTTAKSLIRDVDFKADEKTKNITFTDIGIDKIEYFRKIPNIYGTNAGFLFYLQNAISANIFFRKNSEYIIENNKIAIVDEFTGRVMPVRRWSNGLHEAIEAKESIDITQTSRISSSITYQNFFTLYPKLAGMTGTAKSAALELESIYNLEVVVIPTSKKFQRKDLPDKVYTNDFAKWKAIAKECFEIHKTGRPILVGTSSIEKSDFVSFLLENYKLQYNVLNARPENLKYESEIVGEAGCLNAITIATNMAGRGTDIILGGSPGFKIIRLLKILVLKVKLKEARTKKGLFLTHELYKELQKERLNYDAITQLVKFETEFGQKQIVRQKKLSTLFFYLKINYKSRFKKQKQYINQLGGLYVIGTERQDSKRIDNQLRGRAGRQGDAGSSRFFVSIEDKIFRLFGDNKFSNLFNQLNLTNEEISLESDLITKTLDNTQERVENYYYDIRKQVYDYDELITEQRKTFYLFRSKVLKTQVSGNLIIASTEDVIKKIVKSIKTPQLKFTNLTHKQENQIILEDFEQCRRIMRYALPPINLKQINASNHNVLFEFLMQEFWISYDIHKTKAFSSIGEEYYKEYERSCVLESIDHGWSTNLEKMETIRESIVWRVYAQKDPLAEYKKEGFSTFRKMDEEMKRFLVFAVFDTDFYVT.

Residues Q82, 100-104, and D491 contribute to the ATP site; that span reads GEGKT.

It belongs to the SecA family.

It is found in the plastid. Its subcellular location is the chloroplast stroma. It localises to the chloroplast thylakoid membrane. The enzyme catalyses ATP + H2O + cellular proteinSide 1 = ADP + phosphate + cellular proteinSide 2.. In terms of biological role, has a central role in coupling the hydrolysis of ATP to the transfer of proteins across the thylakoid membrane. This is Protein translocase subunit SecA from Olisthodiscus luteus (Marine phytoflagellate).